We begin with the raw amino-acid sequence, 586 residues long: Zinc finger protein Eos (586 aa).

Disordered stretches follow at residues 1–42 and 68–98; these read MHTP…APDF and EKEFLGAPVGPSVSTPNSQHSSPSRSLSANS. The segment covering 25–34 has biased composition (basic and acidic residues); that stretch reads QGKDNLEREL. Positions 79–98 are enriched in polar residues; that stretch reads SVSTPNSQHSSPSRSLSANS. K100 is covalently cross-linked (Glycyl lysine isopeptide (Lys-Gly) (interchain with G-Cter in SUMO2)). Position 105 is a phosphoserine (S105). C2H2-type zinc fingers lie at residues 159–181, 187–209, 215–237, and 248–271; these read LKCDVCGMVCIGPNVLMVHKRSH, FHCNQCGASFTQKGNLLRHIKLH, FKCPFCNYACRRRDALTGHLRTH, and YKCNYCGRSYKQQSTLEEHKERCH. Residues 281 to 586 are interaction with FOXP3; sequence AQALTGQPGD…HIVRGEHKVG (306 aa). Position 335 is an N6-acetyllysine (K335). The segment at 413–490 is disordered; it reads RLELPGSREA…QPPPTIVVGR (78 aa). Residues 423-433 carry the CTBP-binding motif PEDLG motif; it reads GEGPEDLGDGG. Pro residues predominate over residues 476–485; the sequence is QGPPPQPPPT. A Glycyl lysine isopeptide (Lys-Gly) (interchain with G-Cter in SUMO2) cross-link involves residue K501. 2 C2H2-type zinc fingers span residues 531-553 and 559-583; these read FKCEHCRILFLDHVMFTIHMGCH and FECNICGYHSQDRYEFSSHIVRGEH.

It belongs to the Ikaros C2H2-type zinc-finger protein family. In terms of assembly, self-associates. Interacts with other family members; IKZF1, IKZF2, IKZF3 and IKZF5. Interacts with CTBP2, SPI1 and MITF. Interacts with FOXP3 and CTBP1. As to expression, expressed mainly in the brain. Up-regulated in long term cultured astrocytes. Down-regulated during osteoclast differentiation.

It localises to the nucleus. In terms of biological role, DNA-binding protein that binds to the 5'GGGAATRCC-3' Ikaros-binding sequence. Interacts with SPI1 and MITF to repress transcription of the CTSK and ACP5 promoters via recruitment of corepressors SIN3A and CTBP2. May be involved in the development of central and peripheral nervous systems. Essential for the inhibitory function of regulatory T-cells (Treg). Mediates FOXP3-mediated gene silencing in regulatory T-cells (Treg) via recruitment of corepressor CTBP1. This chain is Zinc finger protein Eos (Ikzf4), found in Mus musculus (Mouse).